A 422-amino-acid polypeptide reads, in one-letter code: Serine protease HTRA2, mitochondrial (422 aa).

The transit peptide at 1–17 (MALRGSHRLEVIFKRCI) directs the protein to the mitochondrion. Positions 18–74 (ASPVLHSQAGNRRSSQLAIKGVDPNSNGNSGQYQQNGEHKEKGWRRLVRFFVPFSLG) are excised as a propeptide. Positions 28 to 55 (NRRSSQLAIKGVDPNSNGNSGQYQQNGE) are disordered. Low complexity predominate over residues 42–53 (NSNGNSGQYQQN). A helical transmembrane segment spans residues 64–82 (LVRFFVPFSLGAAVSAAII). 2 consecutive short sequence motifs (IAP-binding) follow at residues 75 to 78 (AAVS) and 94 to 97 (SKMT). The serine protease stretch occupies residues 139 to 302 (SNGSGFIIEQ…IPIDYVKVFL (164 aa)). Catalysis depends on charge relay system residues H157, D189, and S266. Positions 325–410 (MGITMLTLTP…TLDIVILRGV (86 aa)) constitute a PDZ domain.

This sequence belongs to the peptidase S1C family. Interacts with th/DIAP1 (via BIR 2 domain).

It localises to the mitochondrion intermembrane space. It is found in the mitochondrion membrane. It carries out the reaction Cleavage of non-polar aliphatic amino-acids at the P1 position, with a preference for Val, Ile and Met. At the P2 and P3 positions, Arg is selected most strongly with a secondary preference for other hydrophilic residues.. Its function is as follows. Serine protease that shows proteolytic activity against a non-specific substrate beta-casein. Promotes or induces cell death either by direct binding to and inhibition of BIRC proteins (also called inhibitor of apoptosis proteins, IAPs), leading to an increase in caspase activity, or by a BIRC inhibition-independent, caspase-independent and serine protease activity-dependent mechanism. Can antagonize antiapoptotic activity of th/Diap1 by directly inducing the degradation of th/Diap1. In Drosophila sechellia (Fruit fly), this protein is Serine protease HTRA2, mitochondrial.